A 214-amino-acid chain; its full sequence is 3,4-dihydroxy-2-butanone 4-phosphate synthase (214 aa).

D-ribulose 5-phosphate contacts are provided by residues 37-38 (RE), Asp42, 150-154 (RRGHT), and Glu174. Glu38 is a Mg(2+) binding site. His153 is a binding site for Mg(2+).

This sequence belongs to the DHBP synthase family. As to quaternary structure, homodimer. Mg(2+) is required as a cofactor. It depends on Mn(2+) as a cofactor.

It catalyses the reaction D-ribulose 5-phosphate = (2S)-2-hydroxy-3-oxobutyl phosphate + formate + H(+). The protein operates within cofactor biosynthesis; riboflavin biosynthesis; 2-hydroxy-3-oxobutyl phosphate from D-ribulose 5-phosphate: step 1/1. In terms of biological role, catalyzes the conversion of D-ribulose 5-phosphate to formate and 3,4-dihydroxy-2-butanone 4-phosphate. This chain is 3,4-dihydroxy-2-butanone 4-phosphate synthase, found in Pasteurella multocida (strain Pm70).